A 217-amino-acid chain; its full sequence is Probable GTP-binding protein EngB (217 aa).

Residues 27–201 form the EngB-type G domain; it reads GGVEIAFAGR…AQTLSGWYLA (175 aa). Residues 35–42, 62–66, 80–83, 147–150, and 180–182 contribute to the GTP site; these read GRSNAGKS, GRTQL, DLPG, TKAD, and FSS. Residues Ser42 and Thr64 each coordinate Mg(2+).

Belongs to the TRAFAC class TrmE-Era-EngA-EngB-Septin-like GTPase superfamily. EngB GTPase family. Mg(2+) is required as a cofactor.

Its function is as follows. Necessary for normal cell division and for the maintenance of normal septation. In Aeromonas salmonicida (strain A449), this protein is Probable GTP-binding protein EngB.